Reading from the N-terminus, the 374-residue chain is tRNA-specific 2-thiouridylase MnmA (374 aa).

ATP-binding positions include 12–19 (GMSGGVDS) and methionine 38. Residues 98–100 (NPD) are interaction with target base in tRNA. The Nucleophile role is filled by cysteine 103. A disulfide bond links cysteine 103 and cysteine 200. ATP is bound at residue glycine 127. An interaction with tRNA region spans residues 150–152 (KDQ). Cysteine 200 serves as the catalytic Cysteine persulfide intermediate. The tract at residues 311–312 (RY) is interaction with tRNA.

This sequence belongs to the MnmA/TRMU family.

The protein localises to the cytoplasm. The catalysed reaction is S-sulfanyl-L-cysteinyl-[protein] + uridine(34) in tRNA + AH2 + ATP = 2-thiouridine(34) in tRNA + L-cysteinyl-[protein] + A + AMP + diphosphate + H(+). Its function is as follows. Catalyzes the 2-thiolation of uridine at the wobble position (U34) of tRNA, leading to the formation of s(2)U34. In Lactiplantibacillus plantarum (strain ATCC BAA-793 / NCIMB 8826 / WCFS1) (Lactobacillus plantarum), this protein is tRNA-specific 2-thiouridylase MnmA.